Consider the following 266-residue polypeptide: Hydroxyethylthiazole kinase (266 aa).

Met-39 is a substrate binding site. Lys-115 and Thr-160 together coordinate ATP. Gly-187 is a binding site for substrate.

Belongs to the Thz kinase family. Requires Mg(2+) as cofactor.

The catalysed reaction is 5-(2-hydroxyethyl)-4-methylthiazole + ATP = 4-methyl-5-(2-phosphooxyethyl)-thiazole + ADP + H(+). It participates in cofactor biosynthesis; thiamine diphosphate biosynthesis; 4-methyl-5-(2-phosphoethyl)-thiazole from 5-(2-hydroxyethyl)-4-methylthiazole: step 1/1. In terms of biological role, catalyzes the phosphorylation of the hydroxyl group of 4-methyl-5-beta-hydroxyethylthiazole (THZ). This is Hydroxyethylthiazole kinase from Staphylococcus aureus (strain MSSA476).